The chain runs to 140 residues: Large ribosomal subunit protein uL11 (140 aa).

The protein belongs to the universal ribosomal protein uL11 family. In terms of assembly, part of the ribosomal stalk of the 50S ribosomal subunit. Interacts with L10 and the large rRNA to form the base of the stalk. L10 forms an elongated spine to which L12 dimers bind in a sequential fashion forming a multimeric L10(L12)X complex. In terms of processing, one or more lysine residues are methylated.

Forms part of the ribosomal stalk which helps the ribosome interact with GTP-bound translation factors. This Geotalea daltonii (strain DSM 22248 / JCM 15807 / FRC-32) (Geobacter daltonii) protein is Large ribosomal subunit protein uL11.